Reading from the N-terminus, the 257-residue chain is Aspartate/glutamate leucyltransferase (257 aa).

Belongs to the R-transferase family. Bpt subfamily.

Its subcellular location is the cytoplasm. It carries out the reaction N-terminal L-glutamyl-[protein] + L-leucyl-tRNA(Leu) = N-terminal L-leucyl-L-glutamyl-[protein] + tRNA(Leu) + H(+). The enzyme catalyses N-terminal L-aspartyl-[protein] + L-leucyl-tRNA(Leu) = N-terminal L-leucyl-L-aspartyl-[protein] + tRNA(Leu) + H(+). In terms of biological role, functions in the N-end rule pathway of protein degradation where it conjugates Leu from its aminoacyl-tRNA to the N-termini of proteins containing an N-terminal aspartate or glutamate. This chain is Aspartate/glutamate leucyltransferase, found in Nitrobacter winogradskyi (strain ATCC 25391 / DSM 10237 / CIP 104748 / NCIMB 11846 / Nb-255).